The following is a 155-amino-acid chain: Ribosomal RNA large subunit methyltransferase H (155 aa).

S-adenosyl-L-methionine contacts are provided by residues Leu73, Gly104, and 123–128; that span reads LSRMTF.

Belongs to the RNA methyltransferase RlmH family. Homodimer.

Its subcellular location is the cytoplasm. The enzyme catalyses pseudouridine(1915) in 23S rRNA + S-adenosyl-L-methionine = N(3)-methylpseudouridine(1915) in 23S rRNA + S-adenosyl-L-homocysteine + H(+). Specifically methylates the pseudouridine at position 1915 (m3Psi1915) in 23S rRNA. This Methylococcus capsulatus (strain ATCC 33009 / NCIMB 11132 / Bath) protein is Ribosomal RNA large subunit methyltransferase H.